The following is a 356-amino-acid chain: DNA polymerase IV (356 aa).

The 182-residue stretch at 6–187 folds into the UmuC domain; the sequence is IIHIDMDYFF…LDIGDFPGVG (182 aa). Residues D10 and D105 each contribute to the Mg(2+) site. E106 is an active-site residue.

Belongs to the DNA polymerase type-Y family. Monomer. The cofactor is Mg(2+).

It is found in the cytoplasm. It catalyses the reaction DNA(n) + a 2'-deoxyribonucleoside 5'-triphosphate = DNA(n+1) + diphosphate. In terms of biological role, poorly processive, error-prone DNA polymerase involved in untargeted mutagenesis. Copies undamaged DNA at stalled replication forks, which arise in vivo from mismatched or misaligned primer ends. These misaligned primers can be extended by PolIV. Exhibits no 3'-5' exonuclease (proofreading) activity. May be involved in translesional synthesis, in conjunction with the beta clamp from PolIII. The sequence is that of DNA polymerase IV from Staphylococcus aureus (strain Mu50 / ATCC 700699).